The chain runs to 519 residues: uncharacterized protein (519 aa).

The next 4 helical transmembrane spans lie at 141–161 (GSSLLPYGAGAASCFGAANVF), 202–222 (LGETHLVGLGAIGHGALWALA), 385–405 (FVVRVATAMGVPFEPLAPFVG), and 433–453 (TVVPMAFQSALAGIMLAAELV).

It is found in the cell membrane. This is an uncharacterized protein from Sinorhizobium fredii (strain NBRC 101917 / NGR234).